Consider the following 311-residue polypeptide: Mediator of RNA polymerase II transcription subunit 27-B (311 aa).

The protein belongs to the Mediator complex subunit 27 family. In terms of assembly, component of the Mediator complex.

It is found in the nucleus. Component of the Mediator complex, a coactivator involved in the regulated transcription of nearly all RNA polymerase II-dependent genes. Mediator functions as a bridge to convey information from gene-specific regulatory proteins to the basal RNA polymerase II transcription machinery. Mediator is recruited to promoters by direct interactions with regulatory proteins and serves as a scaffold for the assembly of a functional preinitiation complex with RNA polymerase II and the general transcription factors. This Xenopus laevis (African clawed frog) protein is Mediator of RNA polymerase II transcription subunit 27-B (med27-b).